A 561-amino-acid chain; its full sequence is Embryonal Fyn-associated substrate (561 aa).

The region spanning 5-68 (TSTQLARALY…PANRVKLLPA (64 aa)) is the SH3 domain. 4 disordered regions span residues 68-123 (AGPA…CPPS), 171-215 (HPLT…PGPP), 240-372 (LADG…HNEY), and 390-422 (DKAQGSRPPDQACTGDPELPERGMPAPQEALSP). The span at 103–123 (VPPPARPCPTSGPPAGPCPPS) shows a compositional bias: pro residues. Y253 carries the post-translational modification Phosphotyrosine; by SRC. 2 short sequence motifs (SH3-binding) span residues 305–311 (RPLPALP) and 335–341 (RPLPPPP). The segment covering 308–325 (PALPVPEAPSPSPVPSPA) has biased composition (pro residues). Positions 352 to 372 (VEGDPEGREMEDDPAGHHNEY) are enriched in basic and acidic residues. The divergent helix-loop-helix motif stretch occupies residues 438–488 (FYAGQCQSHYSALQAAVAALMSSTQANQPPRLFVPHSKRVVVAAHRLVFVG).

This sequence belongs to the CAS family. In terms of processing, phosphorylated on multiple tyrosine residues. Phosphorylated on tyrosines by FYN and SRC. The protein has been detected in lung and placenta.

Functionally, docking protein which plays a central coordinating role for tyrosine-kinase-based signaling related to cell adhesion. May serve as an activator of SRC and a downstream effector. Interacts with the SH3 domain of FYN and with CRK, SRC, and YES. In Homo sapiens (Human), this protein is Embryonal Fyn-associated substrate (EFS).